A 233-amino-acid polypeptide reads, in one-letter code: MELLRTVSDTKRTFYALHTRPINTIYRRVVEELMVEMHLLSVNVDFSYNPIYALGVVTTFDRFMQGYQPERDKESIFSAICQAVEQEPQRYRQDAERLKAVAQSLPVNDLVAWLSQANHLQQDADLQAQLQAIASNPNFKYSRLFAIGLFTLLEQSNPDLVKDEKQRTEALKTIAAGLHLSDDKLSKDLELYRSNLDKMTQALAVMADMLTADRKKREQRQQQASTPVAPPNE.

The stretch at 183–205 forms a coiled coil; that stretch reads DKLSKDLELYRSNLDKMTQALAV. The disordered stretch occupies residues 213 to 233; sequence DRKKREQRQQQASTPVAPPNE.

This sequence belongs to the THF1 family.

Its function is as follows. May be involved in photosynthetic membrane biogenesis. This is Protein Thf1 from Trichormus variabilis (strain ATCC 29413 / PCC 7937) (Anabaena variabilis).